The chain runs to 1404 residues: DNA-directed RNA polymerase subunit beta' (1404 aa).

Cysteine 70, cysteine 72, cysteine 85, and cysteine 88 together coordinate Zn(2+). Mg(2+)-binding residues include aspartate 460, aspartate 462, and aspartate 464. Zn(2+)-binding residues include cysteine 825, cysteine 899, cysteine 906, and cysteine 909.

It belongs to the RNA polymerase beta' chain family. In terms of assembly, the RNAP catalytic core consists of 2 alpha, 1 beta, 1 beta' and 1 omega subunit. When a sigma factor is associated with the core the holoenzyme is formed, which can initiate transcription. The cofactor is Mg(2+). It depends on Zn(2+) as a cofactor.

The enzyme catalyses RNA(n) + a ribonucleoside 5'-triphosphate = RNA(n+1) + diphosphate. DNA-dependent RNA polymerase catalyzes the transcription of DNA into RNA using the four ribonucleoside triphosphates as substrates. This chain is DNA-directed RNA polymerase subunit beta', found in Nitrosomonas europaea (strain ATCC 19718 / CIP 103999 / KCTC 2705 / NBRC 14298).